The chain runs to 55 residues: ATP synthase F(0) complex subunit 8 (55 aa).

Residues 7 to 24 (SPWFFIMLTTWLTFSLII) form a helical membrane-spanning segment.

This sequence belongs to the ATPase protein 8 family. Component of the ATP synthase complex composed at least of ATP5F1A/subunit alpha, ATP5F1B/subunit beta, ATP5MC1/subunit c (homooctomer), MT-ATP6/subunit a, MT-ATP8/subunit 8, ATP5ME/subunit e, ATP5MF/subunit f, ATP5MG/subunit g, ATP5MK/subunit k, ATP5MJ/subunit j, ATP5F1C/subunit gamma, ATP5F1D/subunit delta, ATP5F1E/subunit epsilon, ATP5PF/subunit F6, ATP5PB/subunit b, ATP5PD/subunit d, ATP5PO/subunit OSCP. ATP synthase complex consists of a soluble F(1) head domain (subunits alpha(3) and beta(3)) - the catalytic core - and a membrane F(0) domain - the membrane proton channel (subunits c, a, 8, e, f, g, k and j). These two domains are linked by a central stalk (subunits gamma, delta, and epsilon) rotating inside the F1 region and a stationary peripheral stalk (subunits F6, b, d, and OSCP).

The protein resides in the mitochondrion membrane. Functionally, subunit 8, of the mitochondrial membrane ATP synthase complex (F(1)F(0) ATP synthase or Complex V) that produces ATP from ADP in the presence of a proton gradient across the membrane which is generated by electron transport complexes of the respiratory chain. ATP synthase complex consist of a soluble F(1) head domain - the catalytic core - and a membrane F(1) domain - the membrane proton channel. These two domains are linked by a central stalk rotating inside the F(1) region and a stationary peripheral stalk. During catalysis, ATP synthesis in the catalytic domain of F(1) is coupled via a rotary mechanism of the central stalk subunits to proton translocation. In vivo, can only synthesize ATP although its ATP hydrolase activity can be activated artificially in vitro. Part of the complex F(0) domain. In Columbina passerina (Common ground-dove), this protein is ATP synthase F(0) complex subunit 8.